A 449-amino-acid chain; its full sequence is UDP-N-acetylmuramoylalanine--D-glutamate ligase (449 aa).

Residue 118 to 124 participates in ATP binding; that stretch reads GTNGKTT.

This sequence belongs to the MurCDEF family.

The protein resides in the cytoplasm. It catalyses the reaction UDP-N-acetyl-alpha-D-muramoyl-L-alanine + D-glutamate + ATP = UDP-N-acetyl-alpha-D-muramoyl-L-alanyl-D-glutamate + ADP + phosphate + H(+). It functions in the pathway cell wall biogenesis; peptidoglycan biosynthesis. Cell wall formation. Catalyzes the addition of glutamate to the nucleotide precursor UDP-N-acetylmuramoyl-L-alanine (UMA). The sequence is that of UDP-N-acetylmuramoylalanine--D-glutamate ligase from Staphylococcus aureus (strain MSSA476).